The primary structure comprises 100 residues: MAPPTRQLLNAVLVLLLLLATNHQGTGVVVASELRCQCLTTLPRVDFKNIQSLTVTPPGPHCAQTEVIATLKDGHEVCLNPEAPLVQRIVQKILNKGKAN.

Residues 1–31 form the signal peptide; sequence MAPPTRQLLNAVLVLLLLLATNHQGTGVVVA. 2 cysteine pairs are disulfide-bonded: cysteine 36-cysteine 62 and cysteine 38-cysteine 78.

The protein belongs to the intercrine alpha (chemokine CxC) family. As to quaternary structure, homotetramer. At least expressed in the lung and trachea.

The protein localises to the secreted. Its function is as follows. Chemotactic for human polymorphonuclear leukocytes but does not induce chemokinesis or an oxidative burst. Contributes to neutrophil activation during inflammation. This chain is C-X-C motif chemokine 2 (Cxcl2), found in Rattus norvegicus (Rat).